We begin with the raw amino-acid sequence, 335 residues long: S-adenosylmethionine decarboxylase proenzyme (335 aa).

Residues Glu-12 and Glu-15 contribute to the active site. The active-site Schiff-base intermediate with substrate; via pyruvic acid is Ser-70. Ser-70 is subject to Pyruvic acid (Ser); by autocatalysis. Residue Cys-84 is the Proton donor; for catalytic activity of the active site. Residues Ser-231 and His-245 each act as proton acceptor; for processing activity in the active site.

This sequence belongs to the eukaryotic AdoMetDC family. The cofactor is pyruvate. In terms of processing, is synthesized initially as an inactive proenzyme. Formation of the active enzyme involves a self-maturation process in which the active site pyruvoyl group is generated from an internal serine residue via an autocatalytic post-translational modification. Two non-identical subunits are generated from the proenzyme in this reaction, and the pyruvate is formed at the N-terminus of the alpha chain, which is derived from the carboxyl end of the proenzyme. The post-translation cleavage follows an unusual pathway, termed non-hydrolytic serinolysis, in which the side chain hydroxyl group of the serine supplies its oxygen atom to form the C-terminus of the beta chain, while the remainder of the serine residue undergoes an oxidative deamination to produce ammonia and the pyruvoyl group blocking the N-terminus of the alpha chain.

It carries out the reaction S-adenosyl-L-methionine + H(+) = S-adenosyl 3-(methylsulfanyl)propylamine + CO2. It functions in the pathway amine and polyamine biosynthesis; S-adenosylmethioninamine biosynthesis; S-adenosylmethioninamine from S-adenosyl-L-methionine: step 1/1. Its function is as follows. Essential for biosynthesis of the polyamines spermidine and spermine. Promotes maintenance and self-renewal of embryonic stem cells, by maintaining spermine levels. This is S-adenosylmethionine decarboxylase proenzyme (amd1) from Xenopus laevis (African clawed frog).